The primary structure comprises 692 residues: Elongation factor G (692 aa).

One can recognise a tr-type G domain in the interval 8–283 (DHVRNIGIMA…AVVDYFPSPS (276 aa)). GTP-binding positions include 17 to 24 (AHIDAGKT), 81 to 85 (DTPGH), and 135 to 138 (NKMD).

This sequence belongs to the TRAFAC class translation factor GTPase superfamily. Classic translation factor GTPase family. EF-G/EF-2 subfamily.

It is found in the cytoplasm. Functionally, catalyzes the GTP-dependent ribosomal translocation step during translation elongation. During this step, the ribosome changes from the pre-translocational (PRE) to the post-translocational (POST) state as the newly formed A-site-bound peptidyl-tRNA and P-site-bound deacylated tRNA move to the P and E sites, respectively. Catalyzes the coordinated movement of the two tRNA molecules, the mRNA and conformational changes in the ribosome. The chain is Elongation factor G from Magnetococcus marinus (strain ATCC BAA-1437 / JCM 17883 / MC-1).